Here is a 208-residue protein sequence, read N- to C-terminus: uncharacterized protein (208 aa).

The signal sequence occupies residues 1–16 (MKFLLIACLAVPAILA). An N-linked (GlcNAc...) asparagine glycan is attached at N79.

This is an uncharacterized protein from Caenorhabditis elegans.